The primary structure comprises 99 residues: Acylphosphatase-1 (99 aa).

Residue A2 is modified to N-acetylalanine. The Acylphosphatase-like domain occupies 9–99; it reads SVDYEIFGKV…LDYSDFQIVK (91 aa). Residues R24 and N42 contribute to the active site.

It belongs to the acylphosphatase family. In terms of tissue distribution, organ-common type isozyme is found in many different tissues.

The enzyme catalyses an acyl phosphate + H2O = a carboxylate + phosphate + H(+). The protein is Acylphosphatase-1 (ACYP1) of Homo sapiens (Human).